The sequence spans 189 residues: uncharacterized protein (189 aa).

It belongs to the inositol monophosphatase superfamily.

This is an uncharacterized protein from Leptospira biflexa.